A 416-amino-acid chain; its full sequence is Probable mannose-6-phosphate isomerase (416 aa).

4 residues coordinate Zn(2+): Q99, H101, E126, and H259. R278 is an active-site residue.

This sequence belongs to the mannose-6-phosphate isomerase type 1 family. Requires Zn(2+) as cofactor.

The protein resides in the cytoplasm. It catalyses the reaction D-mannose 6-phosphate = D-fructose 6-phosphate. The protein operates within nucleotide-sugar biosynthesis; GDP-alpha-D-mannose biosynthesis; alpha-D-mannose 1-phosphate from D-fructose 6-phosphate: step 1/2. Functionally, involved in the synthesis of the GDP-mannose and dolichol-phosphate-mannose required for a number of critical mannosyl transfer reactions. The sequence is that of Probable mannose-6-phosphate isomerase from Caenorhabditis elegans.